The sequence spans 798 residues: Integrin beta-5 (798 aa).

The N-terminal stretch at 1–23 (MPRVPATLYACLLGLCALVPRLA) is a signal peptide. Residues 24–719 (GLNICTSGSA…REPECGSAPN (696 aa)) are Extracellular-facing. Positions 27–76 (ICTSGSATSCEECLLIHPKCAWCSKEYFGNPRSITSRCDLKANLIRNGCE) constitute a PSI domain. Disulfide bonds link Cys28–Cys46, Cys36–Cys463, Cys39–Cys64, Cys49–Cys75, Cys202–Cys211, Cys259–Cys300, Cys401–Cys413, Cys433–Cys461, Cys465–Cys484, Cys476–Cys487, Cys489–Cys498, Cys500–Cys530, Cys513–Cys528, Cys522–Cys533, Cys535–Cys548, Cys550–Cys571, Cys555–Cys569, Cys563–Cys574, and Cys576–Cys585. The region spanning 136–378 (YPVDLYYLMD…QLIINAYSSI (243 aa)) is the VWFA domain. The Mg(2+) site is built by Ser147 and Ser149. Residues Ser149, Asp152, Asp153, and Asp184 each coordinate Ca(2+). 4 residues coordinate Ca(2+): Asn242, Asp244, Pro246, and Glu247. Glu247 provides a ligand contact to Mg(2+). The N-linked (GlcNAc...) asparagine glycan is linked to Asn347. Gly362 serves as a coordination point for Ca(2+). Residues Asn460 and Asn479 are each glycosylated (N-linked (GlcNAc...) asparagine). I-EGF domains lie at 465-499 (CSTGLEPNSARCSGNGTYTCGLCECDPGYLGTRCE), 500-549 (CQEG…PFCE), 550-586 (CDSFSCARNKGVLCSGHGECHCGECKCHAGYIGDNCN), and 587-626 (CSTDVSTCKAKDGQICSDRGRCVCGQCQCTEPGAFGETCE). N-linked (GlcNAc...) asparagine glycosylation occurs at Asn505. N-linked (GlcNAc...) asparagine glycosylation occurs at Asn586. Disulfide bonds link Cys587–Cys610, Cys594–Cys608, Cys602–Cys613, Cys615–Cys625, Cys628–Cys631, Cys635–Cys682, Cys641–Cys661, Cys644–Cys657, and Cys690–Cys714. N-linked (GlcNAc...) asparagine glycosylation is found at Asn654 and Asn705. Residues 720–742 (AMTILLAVVGSILLIGMALLAIW) form a helical membrane-spanning segment. At 743–798 (KLLVTIHDRREFAKFQSERSRARYEMASNPLYRKPISTHTVDFAFNKFNKSYNGSV) the chain is on the cytoplasmic side. At Ser770 the chain carries Phosphoserine.

The protein belongs to the integrin beta chain family. Heterodimer of an alpha and a beta subunit. Beta-5 (ITGB5) associates with alpha-V (ITGAV). Interacts with MYO10. Interacts with DAB2. Integrin ITGAV:ITGB5 interacts with FBLN5 (via N-terminus). ITGAV:ITGB5 interacts with CCN3. Interacts with tensin TNS3; TNS3 also interacts with PEAK1, thus acting as an adapter molecule to bridge the association of PEAK1 with ITGB5.

The protein resides in the cell membrane. In terms of biological role, integrin alpha-V/beta-5 (ITGAV:ITGB5) is a receptor for fibronectin. It recognizes the sequence R-G-D in its ligand. This is Integrin beta-5 (Itgb5) from Mus musculus (Mouse).